Consider the following 217-residue polypeptide: Octanoyltransferase (217 aa).

In terms of domain architecture, BPL/LPL catalytic spans 32 to 207 (NDSPDELWIV…TLSQLLGYQH (176 aa)). Residues 71 to 78 (RGGQVTYH), 138 to 140 (SLG), and 151 to 153 (GLA) each bind substrate. Residue Cys169 is the Acyl-thioester intermediate of the active site.

It belongs to the LipB family.

The protein localises to the cytoplasm. It carries out the reaction octanoyl-[ACP] + L-lysyl-[protein] = N(6)-octanoyl-L-lysyl-[protein] + holo-[ACP] + H(+). The protein operates within protein modification; protein lipoylation via endogenous pathway; protein N(6)-(lipoyl)lysine from octanoyl-[acyl-carrier-protein]: step 1/2. Catalyzes the transfer of endogenously produced octanoic acid from octanoyl-acyl-carrier-protein onto the lipoyl domains of lipoate-dependent enzymes. Lipoyl-ACP can also act as a substrate although octanoyl-ACP is likely to be the physiological substrate. In Shewanella oneidensis (strain ATCC 700550 / JCM 31522 / CIP 106686 / LMG 19005 / NCIMB 14063 / MR-1), this protein is Octanoyltransferase.